The chain runs to 589 residues: Zinc finger protein 703 (589 aa).

The disordered stretch occupies residues 102–315; the sequence is SQIGKPDPPP…GTGHIAPVSP (214 aa). Residues 113–122 show a composition bias toward low complexity; the sequence is SKLGSLSSSS. The span at 137-148 shows a compositional bias: basic and acidic residues; that stretch reads SGEHQNLDDKSS. The span at 179-188 shows a compositional bias: polar residues; the sequence is NGSSSSVTCT. A compositionally biased stretch (low complexity) spans 196–206; the sequence is SPRASSPQQTS. Over residues 214–230 the composition is skewed to polar residues; the sequence is QSQSPLSQKTAHLQTTH. The segment covering 237-250 has biased composition (low complexity); the sequence is GSDPGNDSSSSGSD. The segment covering 251–262 has biased composition (basic and acidic residues); that stretch reads RNGKKDSDHNKS. Residues 272–299 show a composition bias toward low complexity; sequence SSHARASVNSSSASSSSSPQPDSKTDSQ. The required for interaction with Groucho and hdac2 plays an important role in repression of transcription stretch occupies residues 408–460; sequence VHDPSSALKSGFPLMYPTHHLHSLHPSSLSSSATSSLSHPLYTYGFMLPNETL. The C2H2-type zinc finger occupies 462–490; it reads HACNWVSVGGPCDKRFATSEELLAHLRTH. The tract at residues 498-589 is required for self-association and nuclear localization; the sequence is GKLLSGYPSS…LGSASALGYQ (92 aa).

The protein belongs to the Elbow/Noc family. In terms of assembly, self-associates. Interacts with nlz2. May interact with Groucho corepressor proteins.

It is found in the nucleus. It localises to the cytoplasm. In terms of biological role, transcriptional corepressor which does not bind directly to DNA and may regulate transcription through recruitment of histone deacetylases to gene promoters. Required for segmental gene expression during hindbrain development. May regulate cell adhesion, migration and proliferation. The chain is Zinc finger protein 703 (znf703) from Danio rerio (Zebrafish).